A 227-amino-acid chain; its full sequence is PKHD-type hydroxylase BTH_II1201 (227 aa).

Positions 78-178 (KVFPPLFNRY…RVASFFWIQS (101 aa)) constitute a Fe2OG dioxygenase domain. 3 residues coordinate Fe cation: histidine 96, aspartate 98, and histidine 159. Arginine 169 is a binding site for 2-oxoglutarate.

Fe(2+) serves as cofactor. It depends on L-ascorbate as a cofactor.

The chain is PKHD-type hydroxylase BTH_II1201 from Burkholderia thailandensis (strain ATCC 700388 / DSM 13276 / CCUG 48851 / CIP 106301 / E264).